The following is a 461-amino-acid chain: Anthranilate synthase component 1 (461 aa).

Residues Ser-43 and 238–240 (PYM) each bind L-tryptophan. 273 to 274 (GT) contributes to the chorismate binding site. Position 300 (Glu-300) interacts with Mg(2+). Chorismate contacts are provided by residues Tyr-388, Arg-408, 422 to 424 (GAG), and Gly-424. Residue Glu-437 participates in Mg(2+) binding.

Belongs to the anthranilate synthase component I family. In terms of assembly, heterotetramer consisting of two non-identical subunits: a beta subunit (TrpG) and a large alpha subunit (TrpE). Requires Mg(2+) as cofactor.

The enzyme catalyses chorismate + L-glutamine = anthranilate + pyruvate + L-glutamate + H(+). The protein operates within amino-acid biosynthesis; L-tryptophan biosynthesis; L-tryptophan from chorismate: step 1/5. Feedback inhibited by tryptophan. In terms of biological role, part of a heterotetrameric complex that catalyzes the two-step biosynthesis of anthranilate, an intermediate in the biosynthesis of L-tryptophan. In the first step, the glutamine-binding beta subunit (TrpG) of anthranilate synthase (AS) provides the glutamine amidotransferase activity which generates ammonia as a substrate that, along with chorismate, is used in the second step, catalyzed by the large alpha subunit of AS (TrpE) to produce anthranilate. In the absence of TrpG, TrpE can synthesize anthranilate directly from chorismate and high concentrations of ammonia. The polypeptide is Anthranilate synthase component 1 (trpE) (Methanothermobacter marburgensis (strain ATCC BAA-927 / DSM 2133 / JCM 14651 / NBRC 100331 / OCM 82 / Marburg) (Methanobacterium thermoautotrophicum)).